The sequence spans 496 residues: Transmembrane protein 104 (496 aa).

The Cytoplasmic segment spans residues 1–10 (MAGEITETGE). A helical membrane pass occupies residues 11 to 31 (LYSSYVGLVYMFNLIVGTGAL). Over 32-36 (TMPKA) the chain is Extracellular. A helical transmembrane segment spans residues 37-57 (FATAGWLVSLVLLVFLGFMSF). Topologically, residues 58 to 146 (VTTTFVIEAM…SMFFNKVGVN (89 aa)) are cytoplasmic. The chain crosses the membrane as a helical span at residues 147-167 (LFYFCIIVYLYGDLAIYAAAV). The Extracellular segment spans residues 168–204 (PFSLMQVTCSATGNDSCGVEADTKYNDTDRCWGPLRR). Asparagine 193 carries an N-linked (GlcNAc...) asparagine glycan. Residues 205–225 (VDAYRIYLAIFTLLLGPFTFF) traverse the membrane as a helical segment. Topologically, residues 226–233 (DVQKTKYL) are cytoplasmic. The chain crosses the membrane as a helical span at residues 234-254 (QILTSLMRWIAFAVMIVLALI). Topologically, residues 255–276 (RIGHGQGEGHPPLADFSGVRNL) are extracellular. A helical transmembrane segment spans residues 277–297 (FGVCVYSFMCQHSLPSLITPV). Topologically, residues 298-306 (SSKRHLTRL) are cytoplasmic. Residues 307 to 327 (VFLDYVLILAFYGLLSFTAIF) form a helical membrane-spanning segment. Over 328-354 (CFRGDSLMDMYTLNFARCDVVGLAAVR) the chain is Extracellular. Residues 355–375 (FFLGLFPVFTISTNFPIIAVT) form a helical membrane-spanning segment. Topologically, residues 376-397 (LRNNWKTLFHREGGTYPWVVDR) are cytoplasmic. A helical membrane pass occupies residues 398–418 (VVFPTITLVPPVLVAFCTHDL). The Extracellular segment spans residues 419 to 421 (ESL). The chain crosses the membrane as a helical span at residues 422-442 (VGITGAYAGTGIQYVIPAFLV). Over 443–470 (YHCRRDTQLAFGCGVSNKHRSPFRHTFW) the chain is Cytoplasmic. A helical transmembrane segment spans residues 471 to 491 (VGFVLLWAFSCFIFVTANIIL). Over 492–496 (SETKL) the chain is Extracellular.

Belongs to the TMEM104 family.

The protein localises to the membrane. This Homo sapiens (Human) protein is Transmembrane protein 104 (TMEM104).